Here is a 901-residue protein sequence, read N- to C-terminus: Valine--tRNA ligase (901 aa).

A 'KMSKS' region motif is present at residues 536-540 (KLSKS). ATP is bound at residue lysine 539. A coiled-coil region spans residues 831–901 (LEGLISFEKE…KLQGNLEVLS (71 aa)).

This sequence belongs to the class-I aminoacyl-tRNA synthetase family. ValS type 1 subfamily. In terms of assembly, monomer.

The protein localises to the cytoplasm. It catalyses the reaction tRNA(Val) + L-valine + ATP = L-valyl-tRNA(Val) + AMP + diphosphate. Catalyzes the attachment of valine to tRNA(Val). As ValRS can inadvertently accommodate and process structurally similar amino acids such as threonine, to avoid such errors, it has a 'posttransfer' editing activity that hydrolyzes mischarged Thr-tRNA(Val) in a tRNA-dependent manner. The chain is Valine--tRNA ligase from Chlorobaculum tepidum (strain ATCC 49652 / DSM 12025 / NBRC 103806 / TLS) (Chlorobium tepidum).